A 71-amino-acid chain; its full sequence is Putative RNA-binding regulatory peptide (71 aa).

In terms of assembly, interacts with IGF2BP1 (via KH3 and KH4 domains); the interaction results in increased binding of IGF2BP1 to N6-methyladenosine (m6A)-containing mRNAs. Detected in colon (at protein level).

Enhances binding of IGF2BP1 to N6-methyladenosine (m6A)-containing mRNAs, thereby contributing to increased mRNA stability. Also increases the interaction of IGF2BP1 with RNA stabilizers ELAVL1/HUR, MATR3 and PABPC1, and increases the interaction of RNA stabilizers ELAVL1/HUR, MATR3 and PABPC1 with m6A-containing mRNAs. Contributes to MYC stability by enhancing binding of IGF2BP1 to m6A-containing MYC mRNAs and increasing recruitment of RNA stabilizing proteins to m6A-containing MYC mRNAs. This chain is Putative RNA-binding regulatory peptide, found in Homo sapiens (Human).